The primary structure comprises 231 residues: Large ribosomal subunit protein uL1 (231 aa).

The protein belongs to the universal ribosomal protein uL1 family. Part of the 50S ribosomal subunit.

Functionally, binds directly to 23S rRNA. The L1 stalk is quite mobile in the ribosome, and is involved in E site tRNA release. In terms of biological role, protein L1 is also a translational repressor protein, it controls the translation of the L11 operon by binding to its mRNA. The chain is Large ribosomal subunit protein uL1 from Beijerinckia indica subsp. indica (strain ATCC 9039 / DSM 1715 / NCIMB 8712).